The primary structure comprises 192 residues: Adenylate kinase (192 aa).

Position 12–17 (12–17) interacts with ATP; the sequence is GSGKTT. The tract at residues 34–63 is NMP; the sequence is STGDLLRAEVASGSELGKTIDSFISKGNLV. Residues Thr-35, Arg-40, 61 to 63, 88 to 91, and Gln-95 each bind AMP; these read NLV and GYPR. The interval 130 to 136 is LID; it reads GRNRGAD. Arg-131 serves as a coordination point for ATP. Residues Arg-133 and Arg-145 each contribute to the AMP site. Arg-173 lines the ATP pocket.

It belongs to the adenylate kinase family. Monomer.

It is found in the cytoplasm. It carries out the reaction AMP + ATP = 2 ADP. Its pathway is purine metabolism; AMP biosynthesis via salvage pathway; AMP from ADP: step 1/1. Catalyzes the reversible transfer of the terminal phosphate group between ATP and AMP. Plays an important role in cellular energy homeostasis and in adenine nucleotide metabolism. In Campylobacter jejuni subsp. jejuni serotype O:6 (strain 81116 / NCTC 11828), this protein is Adenylate kinase.